A 620-amino-acid polypeptide reads, in one-letter code: Glutathione-regulated potassium-efflux system protein KefC (620 aa).

Transmembrane regions (helical) follow at residues 4-24, 26-46, 54-74, 90-110, 114-134, 149-169, 178-198, 218-238, 270-290, 294-314, 327-347, and 359-379; these read HTLL…PIAV, LGLG…PWGL, SILH…GLEL, GALQ…FLGL, VAEL…MQAM, FAVL…IPLL, LGAF…VVLL, VFSA…EEVG, GLLL…GTLV, LRIL…LWLV, WFAV…GAAQ, and ALTL…VLLT. The 120-residue stretch at 399-518 folds into the RCK N-terminal domain; that stretch reads QPRVIVAGFG…AGVAMPERET (120 aa). The tract at residues 599-620 is disordered; sequence QGTAEGKHSGEVADEPEVKPSI.

Belongs to the monovalent cation:proton antiporter 2 (CPA2) transporter (TC 2.A.37) family. KefC subfamily. In terms of assembly, homodimer. Interacts with the regulatory subunit KefF.

The protein localises to the cell inner membrane. In terms of biological role, pore-forming subunit of a potassium efflux system that confers protection against electrophiles. Catalyzes K(+)/H(+) antiport. This Salmonella agona (strain SL483) protein is Glutathione-regulated potassium-efflux system protein KefC.